We begin with the raw amino-acid sequence, 456 residues long: Equilibrative nucleoside transporter 2 (456 aa).

Residues 13–33 form a helical membrane-spanning segment; that stretch reads LVGISFFILGLGTLLPWNFFI. N-linked (GlcNAc...) asparagine glycosylation occurs at asparagine 56. Helical transmembrane passes span 69-89, 98-118, 123-143, 161-181, and 192-212; these read WVTLLSQLPLLLFTLLNSFLY, ILGSLLAILLLFALTAALVKV, GLFFSVTMASVWFINSFCAVL, LFLSGQGLAGIFAALAMLMSL, and LGYFITPCVGILLSIVCYLSL. The interval 248–277 is disordered; sequence GVPISPQQASPTLDLDPEKEPEPEEPQKPG. Serine 252 carries the post-translational modification Phosphoserine. A compositionally biased stretch (basic and acidic residues) spans 263–275; the sequence is DPEKEPEPEEPQK. 5 helical membrane-spanning segments follow: residues 288 to 308, 323 to 343, 360 to 380, 396 to 416, and 432 to 452; these read IWLTALCLVLVFTVTLSVFPA, WGLFFNPICCFLLFNVMDWLG, LLPLLVCLRFLFVPLFMLCHV, FITFMLLFAVSNGYLVSLTMC, and ALMTFFLALGLSCGASLSFLF.

It belongs to the SLC29A/ENT transporter (TC 2.A.57) family.

The protein resides in the apical cell membrane. It localises to the basolateral cell membrane. It is found in the nucleus membrane. It catalyses the reaction inosine(in) = inosine(out). The enzyme catalyses adenosine(in) = adenosine(out). It carries out the reaction uridine(out) = uridine(in). The catalysed reaction is thymidine(in) = thymidine(out). It catalyses the reaction hypoxanthine(out) = hypoxanthine(in). The enzyme catalyses adenine(out) = adenine(in). It carries out the reaction cytidine(in) = cytidine(out). The catalysed reaction is thymine(out) = thymine(in). It catalyses the reaction uracil(in) = uracil(out). The enzyme catalyses guanine(out) = guanine(in). It carries out the reaction guanosine(in) = guanosine(out). Bidirectional uniporter involved in the facilitative transport of nucleosides and nucleobases, and contributes to maintaining their cellular homeostasis. Functions as a Na(+)-independent, passive transporter. Involved in the transport of nucleosides such as inosine, adenosine, uridine, thymidine, cytidine and guanosine. Also able to transport purine nucleobases (hypoxanthine, adenine, guanine) and pyrimidine nucleobases (thymine, uracil). Involved in nucleoside transport at basolateral membrane of kidney cells, allowing liver absorption of nucleoside metabolites. Mediates apical nucleoside uptake into Sertoli cells, thereby regulating the transport of nucleosides in testis across the blood-testis-barrier. Mediates both the influx and efflux of hypoxanthine in skeletal muscle microvascular endothelial cells to control the amount of intracellular hypoxanthine available for xanthine oxidase-mediated ROS production. The sequence is that of Equilibrative nucleoside transporter 2 from Mus musculus (Mouse).